The following is a 165-amino-acid chain: Mating factor alpha-1 (165 aa).

Residues M1–A19 constitute a signal peptide (or 20). 4 consecutive propeptides follow at residues A20–A89, E105–A110, E126–A131, and E147–A152.

The active factor is excreted into the culture medium by haploid cells of the alpha mating type and acts on cells of the opposite mating type (type A). It mediates the conjugation process between the two types by inhibiting the initiation of DNA synthesis in type a cells and synchronizing them with type alpha. The protein is Mating factor alpha-1 (MF(ALPHA)1) of Saccharomyces cerevisiae (strain ATCC 204508 / S288c) (Baker's yeast).